A 431-amino-acid chain; its full sequence is Glutamate-1-semialdehyde 2,1-aminomutase (431 aa).

Lys-265 is modified (N6-(pyridoxal phosphate)lysine).

Belongs to the class-III pyridoxal-phosphate-dependent aminotransferase family. HemL subfamily. Homodimer. Pyridoxal 5'-phosphate is required as a cofactor.

Its subcellular location is the cytoplasm. It carries out the reaction (S)-4-amino-5-oxopentanoate = 5-aminolevulinate. It participates in porphyrin-containing compound metabolism; protoporphyrin-IX biosynthesis; 5-aminolevulinate from L-glutamyl-tRNA(Glu): step 2/2. The protein is Glutamate-1-semialdehyde 2,1-aminomutase of Aliivibrio salmonicida (strain LFI1238) (Vibrio salmonicida (strain LFI1238)).